The primary structure comprises 180 residues: Large ribosomal subunit protein uL5 (180 aa).

This sequence belongs to the universal ribosomal protein uL5 family. Part of the 50S ribosomal subunit; part of the 5S rRNA/L5/L18/L25 subcomplex. Contacts the 5S rRNA and the P site tRNA. Forms a bridge to the 30S subunit in the 70S ribosome.

Its function is as follows. This is one of the proteins that bind and probably mediate the attachment of the 5S RNA into the large ribosomal subunit, where it forms part of the central protuberance. In the 70S ribosome it contacts protein S13 of the 30S subunit (bridge B1b), connecting the 2 subunits; this bridge is implicated in subunit movement. Contacts the P site tRNA; the 5S rRNA and some of its associated proteins might help stabilize positioning of ribosome-bound tRNAs. This is Large ribosomal subunit protein uL5 from Polynucleobacter necessarius subsp. necessarius (strain STIR1).